A 167-amino-acid polypeptide reads, in one-letter code: Type IV major pilin protein PilE (167 aa).

Positions 1–7 (MNTLQKG) are cleaved as a propeptide — leader sequence. N-methylphenylalanine is present on F8. The chain crosses the membrane as a helical span at residues 8–28 (FTLIELMIVIAIVGILAAVAL). An O-linked (GlcNAc...) serine glycan is attached at S70. C127 and C160 are disulfide-bonded.

The protein belongs to the N-Me-Phe pilin family. As to quaternary structure, the pili are polar flexible filaments of about 5.4 nanometers diameter and 2.5 micrometers average length; they consist of only a single polypeptide chain arranged in a helical configuration of five subunits per turn in the assembled pilus.

Its subcellular location is the fimbrium. The protein resides in the membrane. Functionally, major component of the type IV pilus (T4P) that plays a role in cellular adherence, microcolony formation, resistance to neutrophil mediated killing, twitching motility as well as transformation. Mediates the attachment and the formation of bacterial microcolonies on host epithelial cells. Mechanistically, pili retractation induces host NF-kappa-B activation in infected cells, which is temporally associated with the formation of gonococcal microcolonies. This is Type IV major pilin protein PilE (pilE) from Neisseria gonorrhoeae.